The primary structure comprises 149 residues: Nucleoside diphosphate kinase (149 aa).

ATP contacts are provided by K9, F57, R85, T91, R102, and N112. H115 functions as the Pros-phosphohistidine intermediate in the catalytic mechanism.

The protein belongs to the NDK family. As to quaternary structure, homotetramer. Requires Mg(2+) as cofactor.

The protein resides in the cytoplasm. It catalyses the reaction a 2'-deoxyribonucleoside 5'-diphosphate + ATP = a 2'-deoxyribonucleoside 5'-triphosphate + ADP. The catalysed reaction is a ribonucleoside 5'-diphosphate + ATP = a ribonucleoside 5'-triphosphate + ADP. Major role in the synthesis of nucleoside triphosphates other than ATP. The ATP gamma phosphate is transferred to the NDP beta phosphate via a ping-pong mechanism, using a phosphorylated active-site intermediate. The sequence is that of Nucleoside diphosphate kinase from Gloeobacter violaceus (strain ATCC 29082 / PCC 7421).